A 530-amino-acid polypeptide reads, in one-letter code: uncharacterized protein (530 aa).

The next 5 helical transmembrane spans lie at 4 to 23 (FLAA…GLAI), 28 to 47 (LFGV…VVST), 57 to 79 (FVFQ…PAFF), 91 to 113 (LFMI…AFGL), and 148 to 170 (VIGY…AVGA). In terms of domain architecture, RCK C-terminal spans 260 to 344 (LGGECDTKIE…MGEVRRFLGD (85 aa)). The next 4 helical transmembrane spans lie at 352-374 (VNLL…PVPL), 379-398 (TMYL…LGAL), 419-441 (LGLA…QALT), and 451-473 (VGFA…LLKL).

This sequence belongs to the AAE transporter (TC 2.A.81) family.

Its subcellular location is the cell membrane. This is an uncharacterized protein from Corynebacterium efficiens (strain DSM 44549 / YS-314 / AJ 12310 / JCM 11189 / NBRC 100395).